Here is a 334-residue protein sequence, read N- to C-terminus: Holliday junction branch migration complex subunit RuvB (334 aa).

Positions Ala4 to Tyr184 are large ATPase domain (RuvB-L). ATP-binding positions include Ile23, Arg24, Gly65, Lys68, Thr69, Thr70, Glu131–Tyr133, Arg174, Tyr184, and Arg221. Thr69 provides a ligand contact to Mg(2+). The tract at residues Asn185–Asp255 is small ATPAse domain (RuvB-S). The tract at residues Pro258–Glu334 is head domain (RuvB-H). Residues Arg294, Arg313, and Arg318 each coordinate DNA.

The protein belongs to the RuvB family. Homohexamer. Forms an RuvA(8)-RuvB(12)-Holliday junction (HJ) complex. HJ DNA is sandwiched between 2 RuvA tetramers; dsDNA enters through RuvA and exits via RuvB. An RuvB hexamer assembles on each DNA strand where it exits the tetramer. Each RuvB hexamer is contacted by two RuvA subunits (via domain III) on 2 adjacent RuvB subunits; this complex drives branch migration. In the full resolvosome a probable DNA-RuvA(4)-RuvB(12)-RuvC(2) complex forms which resolves the HJ.

The protein resides in the cytoplasm. It carries out the reaction ATP + H2O = ADP + phosphate + H(+). The RuvA-RuvB-RuvC complex processes Holliday junction (HJ) DNA during genetic recombination and DNA repair, while the RuvA-RuvB complex plays an important role in the rescue of blocked DNA replication forks via replication fork reversal (RFR). RuvA specifically binds to HJ cruciform DNA, conferring on it an open structure. The RuvB hexamer acts as an ATP-dependent pump, pulling dsDNA into and through the RuvAB complex. RuvB forms 2 homohexamers on either side of HJ DNA bound by 1 or 2 RuvA tetramers; 4 subunits per hexamer contact DNA at a time. Coordinated motions by a converter formed by DNA-disengaged RuvB subunits stimulates ATP hydrolysis and nucleotide exchange. Immobilization of the converter enables RuvB to convert the ATP-contained energy into a lever motion, pulling 2 nucleotides of DNA out of the RuvA tetramer per ATP hydrolyzed, thus driving DNA branch migration. The RuvB motors rotate together with the DNA substrate, which together with the progressing nucleotide cycle form the mechanistic basis for DNA recombination by continuous HJ branch migration. Branch migration allows RuvC to scan DNA until it finds its consensus sequence, where it cleaves and resolves cruciform DNA. The polypeptide is Holliday junction branch migration complex subunit RuvB (Haemophilus ducreyi (strain 35000HP / ATCC 700724)).